We begin with the raw amino-acid sequence, 506 residues long: Trans-cinnamate 4-monooxygenase C4H1 (506 aa).

Short sequence motifs (nuclear localization signal) lie at residues 161–168 and 247–254; these read VKKMPESA and QRRLQLFK. C448 provides a ligand contact to heme.

The protein belongs to the cytochrome P450 family. It depends on heme as a cofactor.

It is found in the nucleus. The enzyme catalyses (E)-cinnamate + reduced [NADPH--hemoprotein reductase] + O2 = (E)-4-coumarate + oxidized [NADPH--hemoprotein reductase] + H2O + H(+). The protein operates within phenylpropanoid metabolism; trans-4-coumarate biosynthesis; trans-4-coumarate from trans-cinnamate: step 1/1. Functionally, component of the floral volatile benzenoid/phenylpropanoid (FVBP) biosynthetic pathway that controls carbon flux to pigments essential for pollination or UV protection, to numerous pytoalexins synthesized by plants when challenged by pathogens, and to lignins. This is Trans-cinnamate 4-monooxygenase C4H1 from Petunia hybrida (Petunia).